A 113-amino-acid polypeptide reads, in one-letter code: MEDYQAAEETAFVVDEVSNIVKEAIESAIGGNAYQHSKVNQWTTNVVEQTLSQLTKLGKPFKYIVTCVIMQKNGAGLHTASSCFWDSSTDGSCTVRWENKTMYCIVSAFGLSI.

Residue Met1 is modified to N-acetylmethionine. Positions 41 to 113 are interaction with GNB1; the sequence is QWTTNVVEQT…CIVSAFGLSI (73 aa).

The protein belongs to the dynein light chain Tctex-type family. In terms of assembly, homodimer. The cytoplasmic dynein 1 complex consists of two catalytic heavy chains (HCs) and a number of non-catalytic subunits presented by intermediate chains (ICs), light intermediate chains (LICs) and light chains (LCs); the composition seems to vary in respect to the IC, LIC and LC composition. The heavy chain homodimer serves as a scaffold for the probable homodimeric assembly of the non-catalytic subunits. The ICs and LICs bind directly to the HC dimer and the LCs assemble on the IC dimer. DYNLT1 and DYNLT3 compete for association with dynein IC (DYNC1I1 or DYNC1I2). Self-associates. Interacts with RHO. Interacts with DYNC1I1 and DYNC1I2. Interacts with DOC2A, DOC2B and SCN10A. Interacts with PVR. Interacts with SVIL isoform 2. Interacts with GNB1; the interaction occurs in presence of guanine nucleotide-binding protein G(T) subunit gamma; the interaction diminishes the association of DYNLT1 with dynein IC (DYNC1I1 or DYNC1I2). Interacts with GNB2, GNB3 and GNB5; the interactions occur in presence of guanine nucleotide-binding protein G(T) subunit gamma. Interacts with ACVR2B and ARHGEF2. Interacts with DNAI4. Interacts with CFAP61. In terms of processing, phosphorylated by BMPR2. The phosphorylation status is proposed to regulate the association with the cytoplasmic dynein complex and may have role in cytoplasmic dynein cargo release.

Its subcellular location is the golgi apparatus. It is found in the cytoplasm. The protein localises to the cytoskeleton. It localises to the spindle. Its function is as follows. Acts as one of several non-catalytic accessory components of the cytoplasmic dynein 1 complex that are thought to be involved in linking dynein to cargos and to adapter proteins that regulate dynein function. Cytoplasmic dynein 1 acts as a motor for the intracellular retrograde motility of vesicles and organelles along microtubules. Binds to transport cargos and is involved in apical cargo transport such as rhodopsin-bearing vesicles in polarized epithelia. May also be a accessory component of axonemal dynein. Plays a role in neuronal morphogenesis; the function is independent of cytoplasmic dynein and seems to be coupled to regulation of the actin cytoskeleton by enhancing Rac1 activity. The function in neurogenesis may be regulated by association with a G-protein beta-gamma dimer. May function as a receptor-independent activator of heterotrimeric G-protein signaling; the activation appears to be independent of a nucleotide exchange. Plays a role in regulating neurogenesis; inhibits the genesis of neurons from precursor cells during cortical development presumably by antagonizing ARHGEF2. Involved in the regulation of mitotic spindle orientation. Unrelated to the role in retrograde microtubule-associated movement may play a role in the dimerization of cytoplasmic proteins/domains such as for ACVR2B. Binds to the cytoplasmic domain of ACVR2B and, in vitro, inhibits ACVR2B signaling. The chain is Dynein light chain Tctex-type 1 (DYNLT1) from Bos taurus (Bovine).